The primary structure comprises 270 residues: 4-hydroxy-tetrahydrodipicolinate reductase (270 aa).

NAD(+) is bound at residue 7 to 12; sequence GANGRM. Arginine 34 is an NADP(+) binding site. Residues 97-99 and 121-124 contribute to the NAD(+) site; these read GTT and SGNM. The active-site Proton donor/acceptor is histidine 155. A (S)-2,3,4,5-tetrahydrodipicolinate-binding site is contributed by histidine 156. The active-site Proton donor is lysine 159. 165 to 166 is a (S)-2,3,4,5-tetrahydrodipicolinate binding site; the sequence is GT.

Belongs to the DapB family.

It is found in the cytoplasm. The catalysed reaction is (S)-2,3,4,5-tetrahydrodipicolinate + NAD(+) + H2O = (2S,4S)-4-hydroxy-2,3,4,5-tetrahydrodipicolinate + NADH + H(+). It carries out the reaction (S)-2,3,4,5-tetrahydrodipicolinate + NADP(+) + H2O = (2S,4S)-4-hydroxy-2,3,4,5-tetrahydrodipicolinate + NADPH + H(+). It functions in the pathway amino-acid biosynthesis; L-lysine biosynthesis via DAP pathway; (S)-tetrahydrodipicolinate from L-aspartate: step 4/4. Functionally, catalyzes the conversion of 4-hydroxy-tetrahydrodipicolinate (HTPA) to tetrahydrodipicolinate. The protein is 4-hydroxy-tetrahydrodipicolinate reductase of Bartonella tribocorum (strain CIP 105476 / IBS 506).